The chain runs to 295 residues: Homeobox protein XHOX-7.1 (295 aa).

2 disordered regions span residues 75–115 (RKPG…PISL) and 134–175 (KPES…KPRT). Over residues 84-97 (SSPTGSPLAGTSHS) the composition is skewed to polar residues. Low complexity predominate over residues 141–153 (SSWIQSPSFSPSP). Basic residues predominate over residues 164–174 (LRKHKTNRKPR). Positions 170–229 (NRKPRTPFTTSQLLALERKFRQKQYLSIAERAEFSSSLNLTETQVKIWFQNRRAKAKRLQ) form a DNA-binding region, homeobox.

This sequence belongs to the Msh homeobox family.

Its subcellular location is the nucleus. The polypeptide is Homeobox protein XHOX-7.1 (Xenopus laevis (African clawed frog)).